The primary structure comprises 419 residues: CCA-adding enzyme (419 aa).

2 residues coordinate ATP: Gly8 and Arg11. Gly8 and Arg11 together coordinate CTP. The Mg(2+) site is built by Asp21 and Asp23. 3 residues coordinate ATP: Arg91, Arg137, and Arg140. CTP contacts are provided by Arg91, Arg137, and Arg140.

This sequence belongs to the tRNA nucleotidyltransferase/poly(A) polymerase family. Bacterial CCA-adding enzyme type 2 subfamily. Mg(2+) serves as cofactor.

It carries out the reaction a tRNA precursor + 2 CTP + ATP = a tRNA with a 3' CCA end + 3 diphosphate. It catalyses the reaction a tRNA with a 3' CCA end + 2 CTP + ATP = a tRNA with a 3' CCACCA end + 3 diphosphate. In terms of biological role, catalyzes the addition and repair of the essential 3'-terminal CCA sequence in tRNAs without using a nucleic acid template. Adds these three nucleotides in the order of C, C, and A to the tRNA nucleotide-73, using CTP and ATP as substrates and producing inorganic pyrophosphate. tRNA 3'-terminal CCA addition is required both for tRNA processing and repair. Also involved in tRNA surveillance by mediating tandem CCA addition to generate a CCACCA at the 3' terminus of unstable tRNAs. While stable tRNAs receive only 3'-terminal CCA, unstable tRNAs are marked with CCACCA and rapidly degraded. The polypeptide is CCA-adding enzyme (Buchnera aphidicola subsp. Baizongia pistaciae (strain Bp)).